Here is a 720-residue protein sequence, read N- to C-terminus: Serine/threonine-protein kinase KIN82 (720 aa).

Polar residues-rich tracts occupy residues 1-13 (MTQQEYRSPSQRL) and 99-116 (FNHNRSKSSGTTDASTSE). 2 disordered regions span residues 1–20 (MTQQEYRSPSQRLSKGRSMS) and 99–128 (FNHNRSKSSGTTDASTSEKGTHKREPRSTI). Residue serine 203 is modified to Phosphoserine. Positions 230–241 (SPLANLSLSNSP) are enriched in low complexity. Positions 230–257 (SPLANLSLSNSPIDSPRKNSETRKDQIP) are disordered. Over residues 244 to 255 (SPRKNSETRKDQ) the composition is skewed to basic and acidic residues. Positions 324-602 (FEKIRLLGQG…AADIKRHPFF (279 aa)) constitute a Protein kinase domain. ATP is bound by residues 330 to 338 (LGQGDVGKV) and lysine 353. Catalysis depends on aspartate 449, which acts as the Proton acceptor.

It belongs to the protein kinase superfamily. Ser/Thr protein kinase family. KIN82 subfamily.

It catalyses the reaction L-seryl-[protein] + ATP = O-phospho-L-seryl-[protein] + ADP + H(+). The enzyme catalyses L-threonyl-[protein] + ATP = O-phospho-L-threonyl-[protein] + ADP + H(+). In terms of biological role, flippase activator that phosphorylates DFN1 and DFN2 and which is involved in the generation of phospholipid asymmetry in membranes by the inward translocation of phospholipids. This chain is Serine/threonine-protein kinase KIN82 (KIN82), found in Saccharomyces cerevisiae (strain ATCC 204508 / S288c) (Baker's yeast).